The primary structure comprises 721 residues: Pentatricopeptide repeat-containing protein At3g49710 (721 aa).

PPR repeat units follow at residues S42–P72, N73–P103, D104–V138, D139–F169, Y172–L202, D204–I238, D239–Q273, N274–P307, D308–P343, D344–S378, R380–L410, N411–P445, N446–T476, and E482–K512. A type E motif region spans residues A517–K592. Positions K593–K623 are type E(+) motif. Residues K624–W721 are type DYW motif.

Belongs to the PPR family. PCMP-H subfamily.

The chain is Pentatricopeptide repeat-containing protein At3g49710 (PCMP-H79) from Arabidopsis thaliana (Mouse-ear cress).